The primary structure comprises 336 residues: MEDLQLVLFVLGAIAIIAVLVHGFWSIRKQQPKPIKERTRAQNISEAQRRDSQGFDADGIGAVRVRKPGTEDLPSSRNHTSVPVMTLQKASATDAGVASSHGYSPERTTAERAEPVRAERAATNATVAGSMNTQPVTPQPASYGVQGVTAEVKQSVEPQTITPSQHVHIESPKYGATTQASPQPASPVQSQAPREPEPLGEPQDVLVLHVVAHEGQEIQGAELLPCLLSLNFKFGDMNIFHRHSDNAGNGKVLFSLANMMKPGVFDPDNMEQFCTQGIVMFMTLPCHGEAQHNFSIMLNSAEQLADDLGAIVLDEQRKVWTEHNKQDYLRRIKAIV.

The Periplasmic segment spans residues 1–6 (MEDLQL). A helical membrane pass occupies residues 7 to 27 (VLFVLGAIAIIAVLVHGFWSI). At 28 to 336 (RKQQPKPIKE…DYLRRIKAIV (309 aa)) the chain is on the cytoplasmic side. Disordered regions lie at residues 31 to 118 (QPKP…PVRA) and 174 to 200 (YGAT…EPLG). The span at 73-91 (LPSSRNHTSVPVMTLQKAS) shows a compositional bias: polar residues. Over residues 108–118 (TTAERAEPVRA) the composition is skewed to basic and acidic residues. Low complexity predominate over residues 179 to 193 (QASPQPASPVQSQAP).

The protein belongs to the ZipA family. As to quaternary structure, interacts with FtsZ via their C-terminal domains.

The protein localises to the cell inner membrane. Essential cell division protein that stabilizes the FtsZ protofilaments by cross-linking them and that serves as a cytoplasmic membrane anchor for the Z ring. Also required for the recruitment to the septal ring of downstream cell division proteins. The sequence is that of Cell division protein ZipA from Shewanella denitrificans (strain OS217 / ATCC BAA-1090 / DSM 15013).